The sequence spans 433 residues: uncharacterized protein (433 aa).

One can recognise a TRAM domain in the interval 1–59 (MGEEYEVEIGPVAHGGHCIARTSEGQVLFVRHALPGERVLARVTEGEEGARYLRADAVE). [4Fe-4S] cluster is bound by residues C72, C80, C83, and C168. S-adenosyl-L-methionine contacts are provided by Q262, Y291, E315, and D359. C386 (nucleophile) is an active-site residue.

It belongs to the class I-like SAM-binding methyltransferase superfamily. RNA M5U methyltransferase family.

This is an uncharacterized protein from Streptomyces avermitilis (strain ATCC 31267 / DSM 46492 / JCM 5070 / NBRC 14893 / NCIMB 12804 / NRRL 8165 / MA-4680).